The primary structure comprises 1416 residues: DNA-directed RNA polymerase subunit beta (1416 aa).

It belongs to the RNA polymerase beta chain family. In plastids the minimal PEP RNA polymerase catalytic core is composed of four subunits: alpha, beta, beta', and beta''. When a (nuclear-encoded) sigma factor is associated with the core the holoenzyme is formed, which can initiate transcription.

The protein localises to the plastid. Its subcellular location is the chloroplast. It catalyses the reaction RNA(n) + a ribonucleoside 5'-triphosphate = RNA(n+1) + diphosphate. In terms of biological role, DNA-dependent RNA polymerase catalyzes the transcription of DNA into RNA using the four ribonucleoside triphosphates as substrates. The polypeptide is DNA-directed RNA polymerase subunit beta (Oltmannsiellopsis viridis (Marine flagellate)).